Reading from the N-terminus, the 206-residue chain is Elongation factor Ts (206 aa).

The interval 81–84 is involved in Mg(2+) ion dislocation from EF-Tu; sequence TDFV.

This sequence belongs to the EF-Ts family.

It localises to the cytoplasm. Functionally, associates with the EF-Tu.GDP complex and induces the exchange of GDP to GTP. It remains bound to the aminoacyl-tRNA.EF-Tu.GTP complex up to the GTP hydrolysis stage on the ribosome. The sequence is that of Elongation factor Ts from Maridesulfovibrio salexigens (strain ATCC 14822 / DSM 2638 / NCIMB 8403 / VKM B-1763) (Desulfovibrio salexigens).